Consider the following 296-residue polypeptide: Acetaldehyde dehydrogenase (296 aa).

Position 15–18 (15–18) interacts with NAD(+); it reads SGNI. Cysteine 132 functions as the Acyl-thioester intermediate in the catalytic mechanism. Residues 164-172 and asparagine 274 each bind NAD(+); that span reads SAGPATRAN.

Belongs to the acetaldehyde dehydrogenase family. As to quaternary structure, interacts with MhpE.

It carries out the reaction acetaldehyde + NAD(+) + CoA = acetyl-CoA + NADH + H(+). It functions in the pathway aromatic compound metabolism; 3-phenylpropanoate degradation. Functionally, catalyzes the conversion of acetaldehyde to acetyl-CoA, using NAD(+) and coenzyme A. Is the final enzyme in the meta-cleavage pathway for the degradation of aromatic compounds. This Pectobacterium atrosepticum (strain SCRI 1043 / ATCC BAA-672) (Erwinia carotovora subsp. atroseptica) protein is Acetaldehyde dehydrogenase.